Consider the following 450-residue polypeptide: Phosphoglucosamine mutase (450 aa).

S101 functions as the Phosphoserine intermediate in the catalytic mechanism. 4 residues coordinate Mg(2+): S101, D240, D242, and D244. S101 carries the phosphoserine modification.

Belongs to the phosphohexose mutase family. The cofactor is Mg(2+). In terms of processing, activated by phosphorylation.

It catalyses the reaction alpha-D-glucosamine 1-phosphate = D-glucosamine 6-phosphate. Its function is as follows. Catalyzes the conversion of glucosamine-6-phosphate to glucosamine-1-phosphate. In Streptococcus pneumoniae serotype 19F (strain G54), this protein is Phosphoglucosamine mutase.